Consider the following 231-residue polypeptide: Vacuolar protein sorting-associated protein 24 (231 aa).

Residues 184–195 show a composition bias toward basic and acidic residues; that stretch reads KAADAATHREQS. Residues 184–214 form a disordered region; it reads KAADAATHREQSLKQALPSLSNGIAKDSTEI.

The protein belongs to the SNF7 family. As to quaternary structure, component of the endosomal sorting required for transport complex III (ESCRT-III).

It localises to the endosome membrane. The protein resides in the endomembrane system. Class E VPS protein implicated in concentration and sorting of cargo proteins of the multivesicular body (MVB) for incorporation into intralumenal vesicles. The lumenal sequestrated membrane proteins will be targeted into the vacuole after fusion of the endosome with the vacuole. This chain is Vacuolar protein sorting-associated protein 24 (vps24), found in Schizosaccharomyces pombe (strain 972 / ATCC 24843) (Fission yeast).